We begin with the raw amino-acid sequence, 481 residues long: MKFMKLGTKPDSFLSKGDNVRYVTNELETEIIIIIGNVKFYLHKFPLLSKSGFLQKHIATSKNEEEKKNQIDEIDISEIPGGSVAFEICVKFCYGITVTLNAYNVVAVRCAAEFLEMNETFEKSNLVYKIDVFLNSTIFRSWKDSIIVLQTTKDLLSDDSEELVKRCLGSIASTASIDTSKVKWSYTYNRKKKLEKVRKPEDGVPKDWWVEDLCELHIDLYKQAIKAIKNRGKVPSNVIGEALHAYAIRRIAGFSKESMQLIDRSLINTIIELLPDEKGNISSSFLTKLHRASIFLGCEETVKEKLKKRVSEQLEETTVNDILMYDLDMVQSLVKEFMNRDPKTHSKVSVAKLIDGYLAEKSRDPNLPLQNFLSLAETLSSFPRHSHDVLYRAIDMFLKEHSGISKSEKKRVCGLMDCRKLSAEACEHAVQNERLPMRVIVQVLFFEQIRANGSSTGYSTPELTTTTLNTEDDEWDHEKEF.

The BTB domain occupies 29-102; sequence TEIIIIIGNV…CYGITVTLNA (74 aa). The NPH3 domain maps to 207-450; that stretch reads DWWVEDLCEL…VQVLFFEQIR (244 aa). At tyrosine 391 the chain carries Phosphotyrosine. The disordered stretch occupies residues 456–481; the sequence is TGYSTPELTTTTLNTEDDEWDHEKEF. Low complexity predominate over residues 460–469; that stretch reads TPELTTTTLN.

This sequence belongs to the NPH3 family. As to expression, expressed in the hypocotyl cells that would differentiate into vascular bundles. Highly expressed in primary root tips and radicles.

It localises to the cell membrane. The protein resides in the cytoplasm. The protein localises to the cytosol. It functions in the pathway protein modification; protein ubiquitination. May act as a substrate-specific adapter of an E3 ubiquitin-protein ligase complex (CUL3-RBX1-BTB) which mediates the ubiquitination and subsequent proteasomal degradation of target proteins. Plays an essential role in auxin-mediated organogenesis and in root gravitropic responses through the control of PIN proteins (e.g. PIN1 and PIN2) polarity in the root tip endodermal cell layer and in shoot epidermis. Recruited to the plasma membrane by PINs (e.g. PIN1 and PIN2) and, in concert with AGC kinases-mediated (e.g. D6PK and PID) PINs phosphorylation, maintains their polarity through limiting lateral diffusion-based escape. In Arabidopsis thaliana (Mouse-ear cress), this protein is Phototropic-responsive NPH3 family protein NPY4.